A 226-amino-acid chain; its full sequence is MEDIKHNKKPNTNNSAETKKASGANPQANHANPNNRSASVNNNSVNNNKKNSSRSSDERNKRKNEKRTKSEFEEKIVKISRISKTTKGGRTMRFSALVVVGDRKGRVGFGIAKALEVPNAIKKALKMAENNVQKIAMNKHGTLFHDVLGRSGAAKVLIKPAPSGTGIIAGGAIRAVVELAGFTDVYTKNMGKNTPINMVRATMDGITSQYTPRQIAKLRSKSLKEL.

Residues 1-71 are disordered; it reads MEDIKHNKKP…RKNEKRTKSE (71 aa). Low complexity predominate over residues 24–54; that stretch reads ANPQANHANPNNRSASVNNNSVNNNKKNSSR. The region spanning 72–135 is the S5 DRBM domain; that stretch reads FEEKIVKISR…KMAENNVQKI (64 aa).

The protein belongs to the universal ribosomal protein uS5 family. As to quaternary structure, part of the 30S ribosomal subunit. Contacts proteins S4 and S8.

Its function is as follows. With S4 and S12 plays an important role in translational accuracy. In terms of biological role, located at the back of the 30S subunit body where it stabilizes the conformation of the head with respect to the body. The polypeptide is Small ribosomal subunit protein uS5 (Mycoplasmoides gallisepticum (strain R(low / passage 15 / clone 2)) (Mycoplasma gallisepticum)).